The chain runs to 35 residues: Photosystem II reaction center protein T (35 aa).

A helical transmembrane segment spans residues 3 to 23 (ALVYTFLLVSTLGIIFFAIFF).

Belongs to the PsbT family. In terms of assembly, PSII is composed of 1 copy each of membrane proteins PsbA, PsbB, PsbC, PsbD, PsbE, PsbF, PsbH, PsbI, PsbJ, PsbK, PsbL, PsbM, PsbT, PsbY, PsbZ, Psb30/Ycf12, at least 3 peripheral proteins of the oxygen-evolving complex and a large number of cofactors. It forms dimeric complexes.

It localises to the plastid. Its subcellular location is the chloroplast thylakoid membrane. In terms of biological role, found at the monomer-monomer interface of the photosystem II (PS II) dimer, plays a role in assembly and dimerization of PSII. PSII is a light-driven water plastoquinone oxidoreductase, using light energy to abstract electrons from H(2)O, generating a proton gradient subsequently used for ATP formation. This is Photosystem II reaction center protein T from Cabomba caroliniana (Carolina fanwort).